Here is a 158-residue protein sequence, read N- to C-terminus: 2-C-methyl-D-erythritol 2,4-cyclodiphosphate synthase (158 aa).

A divalent metal cation is bound by residues Asp9 and His11. Residues 9 to 11 (DVH) and 35 to 36 (HS) each bind 4-CDP-2-C-methyl-D-erythritol 2-phosphate. His43 is a binding site for a divalent metal cation. Residues 57–59 (DIG), 62–66 (FPDTD), 133–136 (TTTE), Phe140, and Arg143 contribute to the 4-CDP-2-C-methyl-D-erythritol 2-phosphate site.

Belongs to the IspF family. Homotrimer. A divalent metal cation serves as cofactor.

It carries out the reaction 4-CDP-2-C-methyl-D-erythritol 2-phosphate = 2-C-methyl-D-erythritol 2,4-cyclic diphosphate + CMP. It functions in the pathway isoprenoid biosynthesis; isopentenyl diphosphate biosynthesis via DXP pathway; isopentenyl diphosphate from 1-deoxy-D-xylulose 5-phosphate: step 4/6. Involved in the biosynthesis of isopentenyl diphosphate (IPP) and dimethylallyl diphosphate (DMAPP), two major building blocks of isoprenoid compounds. Catalyzes the conversion of 4-diphosphocytidyl-2-C-methyl-D-erythritol 2-phosphate (CDP-ME2P) to 2-C-methyl-D-erythritol 2,4-cyclodiphosphate (ME-CPP) with a corresponding release of cytidine 5-monophosphate (CMP). The polypeptide is 2-C-methyl-D-erythritol 2,4-cyclodiphosphate synthase (Actinobacillus pleuropneumoniae serotype 5b (strain L20)).